A 213-amino-acid chain; its full sequence is dITP/XTP pyrophosphatase (213 aa).

7 to 12 (TSNLDK) is a substrate binding site. Catalysis depends on aspartate 74, which acts as the Proton acceptor. Aspartate 74 lines the Mg(2+) pocket. Residues serine 75, 165–168 (FGYD), lysine 188, and 193–194 (HR) each bind substrate.

This sequence belongs to the HAM1 NTPase family. Homodimer. It depends on Mg(2+) as a cofactor.

The catalysed reaction is XTP + H2O = XMP + diphosphate + H(+). The enzyme catalyses dITP + H2O = dIMP + diphosphate + H(+). It catalyses the reaction ITP + H2O = IMP + diphosphate + H(+). Its function is as follows. Pyrophosphatase that catalyzes the hydrolysis of nucleoside triphosphates to their monophosphate derivatives, with a high preference for the non-canonical purine nucleotides XTP (xanthosine triphosphate), dITP (deoxyinosine triphosphate) and ITP. Seems to function as a house-cleaning enzyme that removes non-canonical purine nucleotides from the nucleotide pool, thus preventing their incorporation into DNA/RNA and avoiding chromosomal lesions. This chain is dITP/XTP pyrophosphatase, found in Campylobacter concisus (strain 13826).